The chain runs to 248 residues: MDSKRAMVLRMEGTNNEEEAFLSLKRAGFEPEYVHINDLARKRKFIDDYNLMFIPGGFSAGDYIRAGAIFAARLRPFLSDINKFIDSGRFIIGVCNGFQVLTELGLFFNGDRKIALTVNESNRFECRFTYIRLSTKKVLSGLGNRPFQVPVAHLEGRVYCDNKTLDELIENDQIIFRYVDNNGNYSGYPWNPNGSIMNIAGITNDSGNVIGMMPHPERVYYPYQMSGNERNSDKGTGEIFFRILYNST.

A Glutamine amidotransferase type-1 domain is found at 6–248; the sequence is AMVLRMEGTN…IFFRILYNST (243 aa). The Nucleophile role is filled by Cys95. Catalysis depends on residues His215 and Glu217.

As to quaternary structure, part of the FGAM synthase complex composed of 1 PurL, 1 PurQ and 2 PurS subunits.

It localises to the cytoplasm. The enzyme catalyses N(2)-formyl-N(1)-(5-phospho-beta-D-ribosyl)glycinamide + L-glutamine + ATP + H2O = 2-formamido-N(1)-(5-O-phospho-beta-D-ribosyl)acetamidine + L-glutamate + ADP + phosphate + H(+). It catalyses the reaction L-glutamine + H2O = L-glutamate + NH4(+). Its pathway is purine metabolism; IMP biosynthesis via de novo pathway; 5-amino-1-(5-phospho-D-ribosyl)imidazole from N(2)-formyl-N(1)-(5-phospho-D-ribosyl)glycinamide: step 1/2. Functionally, part of the phosphoribosylformylglycinamidine synthase complex involved in the purines biosynthetic pathway. Catalyzes the ATP-dependent conversion of formylglycinamide ribonucleotide (FGAR) and glutamine to yield formylglycinamidine ribonucleotide (FGAM) and glutamate. The FGAM synthase complex is composed of three subunits. PurQ produces an ammonia molecule by converting glutamine to glutamate. PurL transfers the ammonia molecule to FGAR to form FGAM in an ATP-dependent manner. PurS interacts with PurQ and PurL and is thought to assist in the transfer of the ammonia molecule from PurQ to PurL. This is Phosphoribosylformylglycinamidine synthase subunit PurQ from Picrophilus torridus (strain ATCC 700027 / DSM 9790 / JCM 10055 / NBRC 100828 / KAW 2/3).